The primary structure comprises 157 residues: MKVELCSFSGYKIYPGHGRRYARVDGKVFQFLNAKCESAFLSKRNPRQINWTVLYRRKHKKGQSEEVSKKRTRRAVKFQRAITGASLAEILAKRNQKPEVRKAQREQAIRAAKEAKKAKQATKKQTTQSSKAPAKSAQKQKIAKPMKVSAPRVGGKR.

The disordered stretch occupies residues 95–157 (NQKPEVRKAQ…VSAPRVGGKR (63 aa)). The span at 96-117 (QKPEVRKAQREQAIRAAKEAKK) shows a compositional bias: basic and acidic residues. Residues 123–145 (KKQTTQSSKAPAKSAQKQKIAKP) are compositionally biased toward low complexity.

It belongs to the eukaryotic ribosomal protein eL24 family. As to quaternary structure, component of the large ribosomal subunit.

It is found in the cytoplasm. Functionally, component of the large ribosomal subunit. The ribosome is a large ribonucleoprotein complex responsible for the synthesis of proteins in the cell. Plays an essential role in early embryonic development. This chain is Large ribosomal subunit protein eL24 (rpl24), found in Danio rerio (Zebrafish).